The sequence spans 335 residues: Transcriptional adapter 1 (335 aa).

It belongs to the TADA1 family. Component of the STAGA transcription coactivator-HAT complex, at least composed of SUPT3H, GCN5L2, TAF5L, TAF6L, SUPT7L, TADA3L, TAD1L, TAF10, TAF12, TRRAP and TAF9.

The protein localises to the nucleus. Functionally, probably involved in transcriptional regulation. The chain is Transcriptional adapter 1 (TADA1) from Bos taurus (Bovine).